A 375-amino-acid chain; its full sequence is tRNA-specific 2-thiouridylase MnmA (375 aa).

ATP contacts are provided by residues 9–16 (AMSGGVDS) and leucine 35. Cysteine 105 functions as the Nucleophile in the catalytic mechanism. An intrachain disulfide couples cysteine 105 to cysteine 201. Residue glycine 129 participates in ATP binding. The interval 151 to 153 (KNQ) is interaction with tRNA. Catalysis depends on cysteine 201, which acts as the Cysteine persulfide intermediate. Positions 307–308 (RY) are interaction with tRNA.

Belongs to the MnmA/TRMU family.

It localises to the cytoplasm. It carries out the reaction S-sulfanyl-L-cysteinyl-[protein] + uridine(34) in tRNA + AH2 + ATP = 2-thiouridine(34) in tRNA + L-cysteinyl-[protein] + A + AMP + diphosphate + H(+). Functionally, catalyzes the 2-thiolation of uridine at the wobble position (U34) of tRNA, leading to the formation of s(2)U34. The chain is tRNA-specific 2-thiouridylase MnmA from Leptospira interrogans serogroup Icterohaemorrhagiae serovar copenhageni (strain Fiocruz L1-130).